Here is a 516-residue protein sequence, read N- to C-terminus: Tyrosine decarboxylase 3 (516 aa).

Lys-319 carries the post-translational modification N6-(pyridoxal phosphate)lysine.

It belongs to the group II decarboxylase family. Homodimer. Requires pyridoxal 5'-phosphate as cofactor.

The enzyme catalyses L-tyrosine + H(+) = tyramine + CO2. The protein is Tyrosine decarboxylase 3 (TYRDC-3) of Petroselinum crispum (Parsley).